A 311-amino-acid polypeptide reads, in one-letter code: MSELDAKLNKLGVDRIAISPYKQWTRGYMEPGNIGNGYVTGLKVDAGVRDKSDDDVLDGIVSYDRAETKNAYIGQINMTTASSFTGVQGRVIGYDILRSPEVDKAKPLFTETQWDGSELPIYDAKPLQDALVEYFGTEQDRRHYPAPGSFIVCANKGVTAERPKNDADMKPGQGYGVWSAIAISFAKDPTKDSSMFVEDAGVWETPNEDELLEYLEGRRKAMAKSIAECGQDAHASFESSWIGFAYTMMEPGQIGNAITVAPYVSLPIDSIPGGSILTPDKDMEIMENLTMPEWLEKMGYKSLSANNALKY.

Residues D64 and S82 each coordinate substrate. A Pyruvic acid (Ser) modification is found at S83. The Proton donor role is filled by E198.

The proenzyme is a hexamer of identical pi chains; each pi chain monomer is cleaved to form a small (or beta) chain and a large (or alpha) chain by non-hydrolytic self-catalysis. Requires pyruvate as cofactor.

It catalyses the reaction L-histidine + H(+) = histamine + CO2. This is Histidine decarboxylase proenzyme (hdcA) from Lactobacillus sp. (strain 30a).